Consider the following 475-residue polypeptide: Tryptophan--tRNA ligase, cytoplasmic (475 aa).

Residues Ser-12 to Pro-68 enclose the WHEP-TRS domain. Residues Asp-61–Asp-87 form a disordered region. Lys-158 carries the post-translational modification N6-succinyllysine. A 'HIGH' region motif is present at residues Pro-168–His-177. The short motif at Lys-353–Ser-357 is the 'KMSKS' region element. At Ser-355 the chain carries Phosphoserine.

The protein belongs to the class-I aminoacyl-tRNA synthetase family. As to quaternary structure, homodimer. Interacts with oxidized form of GAPDH. In terms of processing, proteolytic cleavage generates 2 forms; T1-TrpRS and T2-TrpRS.

The protein resides in the cytoplasm. The catalysed reaction is tRNA(Trp) + L-tryptophan + ATP = L-tryptophyl-tRNA(Trp) + AMP + diphosphate + H(+). Functionally, catalyzes the attachment of tryptophan to tRNA(Trp) in a two-step reaction: tryptophan is first activated by ATP to form Trp-AMP and then transferred to the acceptor end of the tRNA(Trp). Could also possess an angiostatic activity. The polypeptide is Tryptophan--tRNA ligase, cytoplasmic (WARS1) (Oryctolagus cuniculus (Rabbit)).